We begin with the raw amino-acid sequence, 340 residues long: Biotin synthase (340 aa).

A Radical SAM core domain is found at 56–283; the sequence is NAVQLSTLLS…KAVVRLSAGR (228 aa). [4Fe-4S] cluster-binding residues include C71, C75, and C78. Residues C115, C146, C206, and R278 each contribute to the [2Fe-2S] cluster site.

The protein belongs to the radical SAM superfamily. Biotin synthase family. As to quaternary structure, homodimer. [4Fe-4S] cluster is required as a cofactor. It depends on [2Fe-2S] cluster as a cofactor.

It catalyses the reaction (4R,5S)-dethiobiotin + (sulfur carrier)-SH + 2 reduced [2Fe-2S]-[ferredoxin] + 2 S-adenosyl-L-methionine = (sulfur carrier)-H + biotin + 2 5'-deoxyadenosine + 2 L-methionine + 2 oxidized [2Fe-2S]-[ferredoxin]. It participates in cofactor biosynthesis; biotin biosynthesis; biotin from 7,8-diaminononanoate: step 2/2. In terms of biological role, catalyzes the conversion of dethiobiotin (DTB) to biotin by the insertion of a sulfur atom into dethiobiotin via a radical-based mechanism. This is Biotin synthase from Burkholderia lata (strain ATCC 17760 / DSM 23089 / LMG 22485 / NCIMB 9086 / R18194 / 383).